Reading from the N-terminus, the 749-residue chain is 1,4-alpha-glucan branching enzyme GlgB (749 aa).

The active-site Nucleophile is aspartate 427. Glutamate 480 functions as the Proton donor in the catalytic mechanism.

Belongs to the glycosyl hydrolase 13 family. GlgB subfamily. Monomer.

The catalysed reaction is Transfers a segment of a (1-&gt;4)-alpha-D-glucan chain to a primary hydroxy group in a similar glucan chain.. It participates in glycan biosynthesis; glycogen biosynthesis. Its function is as follows. Catalyzes the formation of the alpha-1,6-glucosidic linkages in glycogen by scission of a 1,4-alpha-linked oligosaccharide from growing alpha-1,4-glucan chains and the subsequent attachment of the oligosaccharide to the alpha-1,6 position. This chain is 1,4-alpha-glucan branching enzyme GlgB, found in Thermobifida fusca (strain YX).